Here is a 65-residue protein sequence, read N- to C-terminus: Large ribosomal subunit protein bL33 (65 aa).

The tract at residues 17–40 is disordered; sequence SRSVPSSEKRSAGVSRYTTEKNRR.

It belongs to the bacterial ribosomal protein bL33 family.

In Prochlorococcus marinus (strain NATL1A), this protein is Large ribosomal subunit protein bL33.